We begin with the raw amino-acid sequence, 226 residues long: Glutathione S-transferase-like protein gedE (226 aa).

The region spanning 4–85 (LLPIKVWGQG…YLVERYDTAH (82 aa)) is the GST N-terminal domain. The 135-residue stretch at 92–226 (DTNDAQHARQ…VLSAVMPPPS (135 aa)) folds into the GST C-terminal domain.

Belongs to the GST superfamily.

It functions in the pathway secondary metabolite biosynthesis. In terms of biological role, glutathione S-transferase-like protein; part of the gene cluster that mediates the biosynthesis of geodin, an intermediate in the biosynthesis of other natural products. The pathway begins with the synthesis of atrochrysone thioester by the polyketide synthase (PKS) gedC. The atrochrysone carboxyl ACP thioesterase gedB then breaks the thioester bond and releases the atrochrysone carboxylic acid from gedC. The atrochrysone carboxylic acid is then converted to atrochrysone which is further transformed into emodinanthrone. The next step is performed by the emodinanthrone oxygenase gedH that catalyzes the oxidation of emodinanthrone to emodin. Emodin O-methyltransferase encoded probably by gedA then catalyzes methylation of the 8-hydroxy group of emodin to form questin. Ring cleavage of questin by questin oxidase gedK leads to desmethylsulochrin via several intermediates including questin epoxide. Another methylation step probably catalyzed by methyltransferase gedG leads to the formation of sulochrin which is further converted to dihydrogeodin by the sulochrin halogenase gedL. Finally, the dihydrogeodin oxidase gedJ catalyzes the stereospecific phenol oxidative coupling reaction converting dihydrogeodin to geodin. The protein is Glutathione S-transferase-like protein gedE of Aspergillus terreus (strain NIH 2624 / FGSC A1156).